An 84-amino-acid polypeptide reads, in one-letter code: Cytochrome c oxidase subunit 12, mitochondrial (84 aa).

Positions 27–70 constitute a CHCH domain; the sequence is TKHCWQNYVDYHKCILAKGEDFAPCRQFWLAYRSLCPSGWYQRW. A Cx9C motif motif is present at residues 30-40; the sequence is CWQNYVDYHKC. 2 disulfide bridges follow: Cys30–Cys62 and Cys40–Cys51. The short motif at 51 to 62 is the Cx10C motif element; sequence CRQFWLAYRSLC.

This sequence belongs to the cytochrome c oxidase subunit 6B family. Component of the cytochrome c oxidase (complex IV, CIV), a multisubunit enzyme composed of 11 subunits. The complex is composed of a catalytic core of 3 subunits Cox1, Cox2 and Cox3, encoded in the mitochondrial DNA, and 8 supernumerary subunits Cox4, Cox5a/Cox5, Cox6, Cox7, Cox8, Cox7a/Cox9, Cox6b/Cox12 and Cox6a/Cox13, which are encoded in the nuclear genome. The complex exists as a monomer or a dimer and forms respiratory supercomplexes (SCs) in the inner mitochondrial membrane with NADH-ubiquinone oxidoreductase (complex I, CI) and ubiquinol-cytochrome c oxidoreductase (cytochrome b-c1 complex, complex III, CIII), resulting in various different assemblies (supercomplexes I(1)IV(1), I(1)III(3)IV(2), III(2)IV(1) and III(2)IV(2) as well as larger supercomplexes of compositions like I(1)III(2)IV(5-6)).

The protein localises to the mitochondrion inner membrane. It participates in energy metabolism; oxidative phosphorylation. Its function is as follows. Component of the cytochrome c oxidase, the last enzyme in the mitochondrial electron transport chain which drives oxidative phosphorylation. The respiratory chain contains 3 multisubunit complexes succinate dehydrogenase (complex II, CII), ubiquinol-cytochrome c oxidoreductase (cytochrome b-c1 complex, complex III, CIII) and cytochrome c oxidase (complex IV, CIV), that cooperate to transfer electrons derived from NADH and succinate to molecular oxygen, creating an electrochemical gradient over the inner membrane that drives transmembrane transport and the ATP synthase. Cytochrome c oxidase is the component of the respiratory chain that catalyzes the reduction of oxygen to water. Electrons originating from reduced cytochrome c in the intermembrane space (IMS) are transferred via the dinuclear copper A center (CU(A)) of Cox2 and heme A of Cox1 to the active site in Cox1, a binuclear center (BNC) formed by heme A3 and copper B (CU(B)). The BNC reduces molecular oxygen to 2 water molecules using 4 electrons from cytochrome c in the IMS and 4 protons from the mitochondrial matrix. In Neurospora crassa (strain ATCC 24698 / 74-OR23-1A / CBS 708.71 / DSM 1257 / FGSC 987), this protein is Cytochrome c oxidase subunit 12, mitochondrial (cox-13).